Reading from the N-terminus, the 186-residue chain is Ribosome-recycling factor (186 aa).

It belongs to the RRF family.

The protein localises to the cytoplasm. Functionally, responsible for the release of ribosomes from messenger RNA at the termination of protein biosynthesis. May increase the efficiency of translation by recycling ribosomes from one round of translation to another. This chain is Ribosome-recycling factor, found in Burkholderia multivorans (strain ATCC 17616 / 249).